The sequence spans 490 residues: Dual specificity protein kinase CLK3 (490 aa).

The residue at position 7 (Tyr7) is a Phosphotyrosine. A phosphoserine mark is found at Ser9, Ser49, Ser51, Ser67, Ser76, and Ser78. Residues 22-138 (RRRSYSREHE…SKRSSRSVED (117 aa)) form a disordered region. Basic and acidic residues-rich tracts occupy residues 26–56 (YSRE…DRLP) and 63–76 (EHRD…EDRS). The segment covering 103–116 (TRKHAHHCHKRRTR) has biased composition (basic residues). Low complexity predominate over residues 117–130 (SCSSASSRSQQSSK). Residue Ser135 is modified to Phosphoserine. The region spanning 156–472 (YEIVGNLGEG…LAEALLHPFF (317 aa)) is the Protein kinase domain. ATP is bound by residues 162–170 (LGEGTFGKV) and Lys186. Asp283 (proton acceptor) is an active-site residue.

The protein belongs to the protein kinase superfamily. CMGC Ser/Thr protein kinase family. Lammer subfamily. Autophosphorylates on all three types of residues.

The protein resides in the nucleus. It is found in the cytoplasm. It localises to the cytoplasmic vesicle. The protein localises to the secretory vesicle. Its subcellular location is the acrosome. The enzyme catalyses L-seryl-[protein] + ATP = O-phospho-L-seryl-[protein] + ADP + H(+). It carries out the reaction L-threonyl-[protein] + ATP = O-phospho-L-threonyl-[protein] + ADP + H(+). It catalyses the reaction L-tyrosyl-[protein] + ATP = O-phospho-L-tyrosyl-[protein] + ADP + H(+). Its activity is regulated as follows. Leucettine L41 inhibits its kinase activity and affects the regulation of alternative splicing mediated by phosphorylation of SR proteins. Dual specificity kinase acting on both serine/threonine and tyrosine-containing substrates. Phosphorylates serine- and arginine-rich (SR) proteins of the spliceosomal complex. May be a constituent of a network of regulatory mechanisms that enable SR proteins to control RNA splicing and can cause redistribution of SR proteins from speckles to a diffuse nucleoplasmic distribution. Phosphorylates SRSF1 and SRSF3. Regulates the alternative splicing of tissue factor (F3) pre-mRNA in endothelial cells. The protein is Dual specificity protein kinase CLK3 (CLK3) of Bos taurus (Bovine).